The sequence spans 147 residues: UPF0306 protein YhbP (147 aa).

It belongs to the UPF0306 family.

The chain is UPF0306 protein YhbP from Escherichia fergusonii (strain ATCC 35469 / DSM 13698 / CCUG 18766 / IAM 14443 / JCM 21226 / LMG 7866 / NBRC 102419 / NCTC 12128 / CDC 0568-73).